Consider the following 453-residue polypeptide: Alpha-2B adrenergic receptor (453 aa).

Residues 1-17 (MSGPAMVHQEPYSVQAT) are Extracellular-facing. Residues 18 to 42 (AAIASAITFLILFTIFGNALVILAV) form a helical membrane-spanning segment. Topologically, residues 43-54 (LTSRSLRAPQNL) are cytoplasmic. The helical transmembrane segment at 55 to 80 (FLVSLAAADILVATLIIPFSLANELL) threads the bilayer. Residues 81 to 90 (GYWYFWRAWC) are Extracellular-facing. A disulfide bridge connects residues C90 and C169. Residues 91–113 (EVYLALDVLFCTSSIVHLCAISL) form a helical membrane-spanning segment. Topologically, residues 114 to 135 (DRYWAVSRALEYNSKRTPRRIK) are cytoplasmic. A helical membrane pass occupies residues 136–158 (CIILTVWLIAAVISLPPLIYKGD). The Extracellular portion of the chain corresponds to 159 to 174 (QRPEPHGLPQCELNQE). A helical transmembrane segment spans residues 175–198 (AWYILASSIGSFFAPCLIMILVYL). Topologically, residues 199–375 (RIYVIAKRSH…LSREKRFTFV (177 aa)) are cytoplasmic. Positions 214–329 (AKRGSGEGES…ASPASVFNPP (116 aa)) are disordered. The span at 303-314 (AEEDEEEVEECE) shows a compositional bias: acidic residues. Residues 376-399 (LAVVIGVFVVCWFPFFFSYSLGAI) traverse the membrane as a helical segment. Residues 400 to 408 (CPQHCKVPH) are Extracellular-facing. A helical transmembrane segment spans residues 409–432 (GLFQFFFWIGYCNSSLNPVIYTIF). The Cytoplasmic portion of the chain corresponds to 433–453 (NQDFRRAFRRILCRQWTQTGW). C445 is lipidated: S-palmitoyl cysteine.

Belongs to the G-protein coupled receptor 1 family. Adrenergic receptor subfamily. ADRA2B sub-subfamily. In terms of assembly, interacts with RAB26. Interacts with PPP1R9B. Interacts with GGA1, GGA2 and GGA3.

It is found in the cell membrane. Functionally, alpha-2 adrenergic receptors mediate the catecholamine-induced inhibition of adenylate cyclase through the action of G proteins. This is Alpha-2B adrenergic receptor (Adra2b) from Mus musculus (Mouse).